We begin with the raw amino-acid sequence, 69 residues long: Cytochrome c oxidase subunit 8A, mitochondrial (69 aa).

The N-terminal 25 residues, 1–25, are a transit peptide targeting the mitochondrion; it reads MSVLTPLLLRGLAGSARRLPVPRAQ. The short motif at 2–19 is the SIFI-degron element; sequence SVLTPLLLRGLAGSARRL. The Mitochondrial matrix portion of the chain corresponds to 26–36; it reads IHSKPPREQLG. The chain crosses the membrane as a helical span at residues 37 to 60; it reads TMDVAIGITSCFLCFLLPAGWVLS. At 61–69 the chain is on the mitochondrial intermembrane side; the sequence is HLESYKKRE.

The protein belongs to the cytochrome c oxidase VIII family. Component of the cytochrome c oxidase (complex IV, CIV), a multisubunit enzyme composed of 14 subunits. The complex is composed of a catalytic core of 3 subunits MT-CO1, MT-CO2 and MT-CO3, encoded in the mitochondrial DNA, and 11 supernumerary subunits COX4I, COX5A, COX5B, COX6A, COX6B, COX6C, COX7A, COX7B, COX7C, COX8 and NDUFA4, which are encoded in the nuclear genome. The complex exists as a monomer or a dimer and forms supercomplexes (SCs) in the inner mitochondrial membrane with NADH-ubiquinone oxidoreductase (complex I, CI) and ubiquinol-cytochrome c oxidoreductase (cytochrome b-c1 complex, complex III, CIII), resulting in different assemblies (supercomplex SCI(1)III(2)IV(1) and megacomplex MCI(2)III(2)IV(2)). In response to mitochondrial stress, the precursor protein is ubiquitinated by the SIFI complex in the cytoplasm before mitochondrial import, leading to its degradation. Within the SIFI complex, UBR4 initiates ubiquitin chain that are further elongated or branched by KCMF1.

It is found in the mitochondrion inner membrane. Its pathway is energy metabolism; oxidative phosphorylation. In terms of biological role, component of the cytochrome c oxidase, the last enzyme in the mitochondrial electron transport chain which drives oxidative phosphorylation. The respiratory chain contains 3 multisubunit complexes succinate dehydrogenase (complex II, CII), ubiquinol-cytochrome c oxidoreductase (cytochrome b-c1 complex, complex III, CIII) and cytochrome c oxidase (complex IV, CIV), that cooperate to transfer electrons derived from NADH and succinate to molecular oxygen, creating an electrochemical gradient over the inner membrane that drives transmembrane transport and the ATP synthase. Cytochrome c oxidase is the component of the respiratory chain that catalyzes the reduction of oxygen to water. Electrons originating from reduced cytochrome c in the intermembrane space (IMS) are transferred via the dinuclear copper A center (CU(A)) of subunit 2 and heme A of subunit 1 to the active site in subunit 1, a binuclear center (BNC) formed by heme A3 and copper B (CU(B)). The BNC reduces molecular oxygen to 2 water molecules using 4 electrons from cytochrome c in the IMS and 4 protons from the mitochondrial matrix. This Carlito syrichta (Philippine tarsier) protein is Cytochrome c oxidase subunit 8A, mitochondrial (COX8A).